The sequence spans 235 residues: Large ribosomal subunit protein uL1 (235 aa).

Belongs to the universal ribosomal protein uL1 family. As to quaternary structure, part of the 50S ribosomal subunit.

Binds directly to 23S rRNA. The L1 stalk is quite mobile in the ribosome, and is involved in E site tRNA release. In terms of biological role, protein L1 is also a translational repressor protein, it controls the translation of the L11 operon by binding to its mRNA. The chain is Large ribosomal subunit protein uL1 from Paenarthrobacter aurescens (strain TC1).